A 312-amino-acid polypeptide reads, in one-letter code: MDEANHSVVSEFVFLGLSDSRKIQLLLFLFFSVFYVSSLMGNLLIVLTVTSDPRLQSPMYFLLANLSIINLVFCSSTAPKMIYDLFRKHKTISFGGCVVQIFFIHAVGGTEMVLLIAMAFDRYVAICKPLHYLTIMNPQRCILFLVISWIIGIIHSVIQLAFVVDLLFCGPNELDSFFCDLPRFIKLACIETYTLGFMVTANSGFISLASFLILIISYIFILVTVQKKSSGGIFKAFSMLSAHVIVVVLVFGPLIFFYIFPFPTSHLDKFLAIFDAVITPVLNPVIYTFRNKEMMVAMRRRCSQFVNYSKIF.

Over 1–25 (MDEANHSVVSEFVFLGLSDSRKIQL) the chain is Extracellular. The N-linked (GlcNAc...) asparagine glycan is linked to Asn5. A helical transmembrane segment spans residues 26–49 (LLFLFFSVFYVSSLMGNLLIVLTV). The Cytoplasmic segment spans residues 50 to 57 (TSDPRLQS). Residues 58–79 (PMYFLLANLSIINLVFCSSTAP) traverse the membrane as a helical segment. The Extracellular segment spans residues 80–100 (KMIYDLFRKHKTISFGGCVVQ). A disulfide bridge links Cys97 with Cys189. A helical transmembrane segment spans residues 101 to 120 (IFFIHAVGGTEMVLLIAMAF). Residues 121–139 (DRYVAICKPLHYLTIMNPQ) are Cytoplasmic-facing. Residues 140–158 (RCILFLVISWIIGIIHSVI) traverse the membrane as a helical segment. Residues 159–195 (QLAFVVDLLFCGPNELDSFFCDLPRFIKLACIETYTL) are Extracellular-facing. A helical membrane pass occupies residues 196-219 (GFMVTANSGFISLASFLILIISYI). The Cytoplasmic portion of the chain corresponds to 220-235 (FILVTVQKKSSGGIFK). A helical transmembrane segment spans residues 236-258 (AFSMLSAHVIVVVLVFGPLIFFY). At 259–269 (IFPFPTSHLDK) the chain is on the extracellular side. Residues 270–289 (FLAIFDAVITPVLNPVIYTF) form a helical membrane-spanning segment. The Cytoplasmic segment spans residues 290–312 (RNKEMMVAMRRRCSQFVNYSKIF).

Belongs to the G-protein coupled receptor 1 family.

It localises to the cell membrane. Its function is as follows. Odorant receptor. The chain is Olfactory receptor 4F6 (OR4F6) from Homo sapiens (Human).